A 344-amino-acid polypeptide reads, in one-letter code: Holliday junction branch migration complex subunit RuvB (344 aa).

Basic and acidic residues predominate over residues 1–25 (MTDSDPTLRPDRLPEDVQATDDRAL). The disordered stretch occupies residues 1–33 (MTDSDPTLRPDRLPEDVQATDDRALRPQSLDDF). The interval 1 to 186 (MTDSDPTLRP…FGIPTRLNFY (186 aa)) is large ATPase domain (RuvB-L). Residues L25, R26, G67, K70, T71, T72, 133 to 135 (EDF), R176, Y186, and R223 contribute to the ATP site. T71 provides a ligand contact to Mg(2+). Positions 187 to 257 (TIAELDQIVA…IADSALTRLG (71 aa)) are small ATPAse domain (RuvB-S). A head domain (RuvB-H) region spans residues 260–344 (DLGLDGADRR…PKRPDQGELI (85 aa)). Residues R296, R315, and R320 each coordinate DNA.

The protein belongs to the RuvB family. Homohexamer. Forms an RuvA(8)-RuvB(12)-Holliday junction (HJ) complex. HJ DNA is sandwiched between 2 RuvA tetramers; dsDNA enters through RuvA and exits via RuvB. An RuvB hexamer assembles on each DNA strand where it exits the tetramer. Each RuvB hexamer is contacted by two RuvA subunits (via domain III) on 2 adjacent RuvB subunits; this complex drives branch migration. In the full resolvosome a probable DNA-RuvA(4)-RuvB(12)-RuvC(2) complex forms which resolves the HJ.

It is found in the cytoplasm. The catalysed reaction is ATP + H2O = ADP + phosphate + H(+). Its function is as follows. The RuvA-RuvB-RuvC complex processes Holliday junction (HJ) DNA during genetic recombination and DNA repair, while the RuvA-RuvB complex plays an important role in the rescue of blocked DNA replication forks via replication fork reversal (RFR). RuvA specifically binds to HJ cruciform DNA, conferring on it an open structure. The RuvB hexamer acts as an ATP-dependent pump, pulling dsDNA into and through the RuvAB complex. RuvB forms 2 homohexamers on either side of HJ DNA bound by 1 or 2 RuvA tetramers; 4 subunits per hexamer contact DNA at a time. Coordinated motions by a converter formed by DNA-disengaged RuvB subunits stimulates ATP hydrolysis and nucleotide exchange. Immobilization of the converter enables RuvB to convert the ATP-contained energy into a lever motion, pulling 2 nucleotides of DNA out of the RuvA tetramer per ATP hydrolyzed, thus driving DNA branch migration. The RuvB motors rotate together with the DNA substrate, which together with the progressing nucleotide cycle form the mechanistic basis for DNA recombination by continuous HJ branch migration. Branch migration allows RuvC to scan DNA until it finds its consensus sequence, where it cleaves and resolves cruciform DNA. This chain is Holliday junction branch migration complex subunit RuvB, found in Jannaschia sp. (strain CCS1).